We begin with the raw amino-acid sequence, 404 residues long: Probable tRNA sulfurtransferase (404 aa).

The THUMP domain maps to 60-165; the sequence is HEVAESLKEI…DEAAYISYEN (106 aa). ATP is bound by residues 183 to 184, 208 to 209, Arg-265, Gly-287, and Gln-296; these read ML and HF.

Belongs to the ThiI family.

Its subcellular location is the cytoplasm. It carries out the reaction [ThiI sulfur-carrier protein]-S-sulfanyl-L-cysteine + a uridine in tRNA + 2 reduced [2Fe-2S]-[ferredoxin] + ATP + H(+) = [ThiI sulfur-carrier protein]-L-cysteine + a 4-thiouridine in tRNA + 2 oxidized [2Fe-2S]-[ferredoxin] + AMP + diphosphate. It catalyses the reaction [ThiS sulfur-carrier protein]-C-terminal Gly-Gly-AMP + S-sulfanyl-L-cysteinyl-[cysteine desulfurase] + AH2 = [ThiS sulfur-carrier protein]-C-terminal-Gly-aminoethanethioate + L-cysteinyl-[cysteine desulfurase] + A + AMP + 2 H(+). It functions in the pathway cofactor biosynthesis; thiamine diphosphate biosynthesis. In terms of biological role, catalyzes the ATP-dependent transfer of a sulfur to tRNA to produce 4-thiouridine in position 8 of tRNAs, which functions as a near-UV photosensor. Also catalyzes the transfer of sulfur to the sulfur carrier protein ThiS, forming ThiS-thiocarboxylate. This is a step in the synthesis of thiazole, in the thiamine biosynthesis pathway. The sulfur is donated as persulfide by IscS. This chain is Probable tRNA sulfurtransferase, found in Streptococcus agalactiae serotype III (strain NEM316).